Reading from the N-terminus, the 191-residue chain is Calcium-binding protein CML42 (191 aa).

EF-hand domains are found at residues 25-60 (LNAL…LGLN), 116-151 (ENES…LGLP), and 154-189 (GEME…VVIP). Aspartate 38, asparagine 40, aspartate 42, glutamate 49, aspartate 129, asparagine 131, aspartate 133, glutamate 140, aspartate 167, asparagine 169, aspartate 171, arginine 173, and glutamate 178 together coordinate Ca(2+).

As to quaternary structure, interacts with KIC. Expressed in seedling shoots, roots, rosette leaves and flowers. Expressed in the leaf trichome support cells.

Its function is as follows. Probable calcium sensor that binds calcium in vitro. Involved in the regulation of trichome branching. This is Calcium-binding protein CML42 (CML42) from Arabidopsis thaliana (Mouse-ear cress).